Reading from the N-terminus, the 188-residue chain is Peptidyl-tRNA hydrolase (188 aa).

Tyr15 lines the tRNA pocket. His20 acts as the Proton acceptor in catalysis. Residues Phe66, Asn68, and Asn114 each contribute to the tRNA site.

It belongs to the PTH family. In terms of assembly, monomer.

The protein resides in the cytoplasm. It carries out the reaction an N-acyl-L-alpha-aminoacyl-tRNA + H2O = an N-acyl-L-amino acid + a tRNA + H(+). Hydrolyzes ribosome-free peptidyl-tRNAs (with 1 or more amino acids incorporated), which drop off the ribosome during protein synthesis, or as a result of ribosome stalling. Its function is as follows. Catalyzes the release of premature peptidyl moieties from peptidyl-tRNA molecules trapped in stalled 50S ribosomal subunits, and thus maintains levels of free tRNAs and 50S ribosomes. The chain is Peptidyl-tRNA hydrolase from Lactococcus lactis subsp. cremoris (strain MG1363).